Reading from the N-terminus, the 677-residue chain is MNFELTSAYKPTGDQPEAIAQLTEGVLQGVPAQTLLGVTGSGKTFTIANVIANINKPTLILSHNKTLAAQLYSEFKGFFPNNAVEYYVSYYDYYQPEAYLPNSDTYIEKDLAINDEIDKLRLAATSSLLSGRKDVVVVSSVSCIYGMGNPSDFYKNVIEIERGRMLDRNVFLRRLVDSLYVRNDIDLNRGNFRVKGDTVDIFLAYSDTLLRVTFWGDEIDGIEEVDPITGVTTAPFEAYKIYPANLFMTTKEATLRAIHEIEDDLTKQVAFFESIGKEYEAKRLYERVTYDMEMIRELGHCSGIENYSRYFDGRAAGTRPYCLLDFFPDDFLLVIDESHVSVPQVRAMYGGDRARKINLVEYGFRLPAAMDNRPLKFEEFEEMTKQVIYVSATPAEYELIQSEGIVVEQVIRPTGLLDPVIEVRPSLNQIDDLMEEIQLRIEKEERVLVTTLTKRMAEELTEYLLNNNVRCNYIHSDVDTLERVKIMDDLRQGVYDVLIGVNLLREGLDLPEVSLVAILDADKEGFLRSHRSLTQTAGRAARNVNGKVIMYADKITDSMRLTIDETNRRREKQLAYNEANGITPQQIKKARNLSVFGSPGSEADELLKEKHAYVEPSSPNIAADPIVQYMSKAQMEKSIERTRKLMQEAAKKLEFIEAAQYRNELLKLEDLMKEKWG.

The Helicase ATP-binding domain occupies 24-412 (EGVLQGVPAQ…EGIVVEQVIR (389 aa)). 37–44 (GVTGSGKT) is an ATP binding site. The Beta-hairpin motif lies at 90–113 (YYDYYQPEAYLPNSDTYIEKDLAI). The 163-residue stretch at 429-591 (QIDDLMEEIQ…ITPQQIKKAR (163 aa)) folds into the Helicase C-terminal domain. A UVR domain is found at 636–671 (EKSIERTRKLMQEAAKKLEFIEAAQYRNELLKLEDL).

It belongs to the UvrB family. In terms of assembly, forms a heterotetramer with UvrA during the search for lesions. Interacts with UvrC in an incision complex.

It is found in the cytoplasm. Its function is as follows. The UvrABC repair system catalyzes the recognition and processing of DNA lesions. A damage recognition complex composed of 2 UvrA and 2 UvrB subunits scans DNA for abnormalities. Upon binding of the UvrA(2)B(2) complex to a putative damaged site, the DNA wraps around one UvrB monomer. DNA wrap is dependent on ATP binding by UvrB and probably causes local melting of the DNA helix, facilitating insertion of UvrB beta-hairpin between the DNA strands. Then UvrB probes one DNA strand for the presence of a lesion. If a lesion is found the UvrA subunits dissociate and the UvrB-DNA preincision complex is formed. This complex is subsequently bound by UvrC and the second UvrB is released. If no lesion is found, the DNA wraps around the other UvrB subunit that will check the other stand for damage. The protein is UvrABC system protein B of Bacteroides thetaiotaomicron (strain ATCC 29148 / DSM 2079 / JCM 5827 / CCUG 10774 / NCTC 10582 / VPI-5482 / E50).